Consider the following 239-residue polypeptide: MGKAIFITGTGTEIGKTVATSFLAFAFQKMGLNTKIFKPIQTGLAEDGVSFADQYWYEKVVGLAQSEGLYYMEPAVSPHLAATLTNTTIDPALIVEKIEQWKRQYDIVLVEGAGGLAVPLIEKEQGFYMTNDLIREYNIPIIIVSLAGLGAIHHTVTTVSYAQQQGIRILGLIFNQFNAESIIHVNNIETIKKMLDLPVIATLPSLAKVTKHTMMALAERWLENNEQKQLLQEVLSVAI.

13–18 is a binding site for ATP; it reads EIGKTV. T17 provides a ligand contact to Mg(2+). Residue K38 is part of the active site. T42 contacts substrate. Residues K59 and E111 each contribute to the Mg(2+) site. Residues 111 to 114, 175 to 176, and 204 to 206 each bind ATP; these read EGAG, NQ, and PSL.

The protein belongs to the dethiobiotin synthetase family. Homodimer. It depends on Mg(2+) as a cofactor.

Its subcellular location is the cytoplasm. It catalyses the reaction (7R,8S)-7,8-diammoniononanoate + CO2 + ATP = (4R,5S)-dethiobiotin + ADP + phosphate + 3 H(+). Its pathway is cofactor biosynthesis; biotin biosynthesis; biotin from 7,8-diaminononanoate: step 1/2. Functionally, catalyzes a mechanistically unusual reaction, the ATP-dependent insertion of CO2 between the N7 and N8 nitrogen atoms of 7,8-diaminopelargonic acid (DAPA, also called 7,8-diammoniononanoate) to form a ureido ring. The protein is ATP-dependent dethiobiotin synthetase BioD of Geobacillus sp. (strain WCH70).